The following is an 88-amino-acid chain: SPbeta prophage-derived protein BhlB (88 aa).

2 helical membrane-spanning segments follow: residues 15-35 (LLAI…AFII) and 45-65 (DCLY…AAWF).

It belongs to the SPP1 holin family.

The protein localises to the cell membrane. In terms of biological role, may be involved in the secretion of the autolysin BlyA. The protein is SPbeta prophage-derived protein BhlB (bhlB) of Bacillus subtilis (strain 168).